We begin with the raw amino-acid sequence, 252 residues long: Protein BTG3 (252 aa).

Residues 138-162 (VTSDYHSGSSSSDEDTSKEVEVKPS) form a disordered region.

It belongs to the BTG family. In terms of tissue distribution, highly expressed in the brain.

Its function is as follows. Overexpression impairs serum-induced cell cycle progression from the G0/G1 to S phase. This chain is Protein BTG3, found in Rattus norvegicus (Rat).